The sequence spans 502 residues: Aspartyl/glutamyl-tRNA(Asn/Gln) amidotransferase subunit B (502 aa).

It belongs to the GatB/GatE family. GatB subfamily. In terms of assembly, heterotrimer of A, B and C subunits.

It carries out the reaction L-glutamyl-tRNA(Gln) + L-glutamine + ATP + H2O = L-glutaminyl-tRNA(Gln) + L-glutamate + ADP + phosphate + H(+). It catalyses the reaction L-aspartyl-tRNA(Asn) + L-glutamine + ATP + H2O = L-asparaginyl-tRNA(Asn) + L-glutamate + ADP + phosphate + 2 H(+). Functionally, allows the formation of correctly charged Asn-tRNA(Asn) or Gln-tRNA(Gln) through the transamidation of misacylated Asp-tRNA(Asn) or Glu-tRNA(Gln) in organisms which lack either or both of asparaginyl-tRNA or glutaminyl-tRNA synthetases. The reaction takes place in the presence of glutamine and ATP through an activated phospho-Asp-tRNA(Asn) or phospho-Glu-tRNA(Gln). The chain is Aspartyl/glutamyl-tRNA(Asn/Gln) amidotransferase subunit B from Brucella suis (strain ATCC 23445 / NCTC 10510).